Reading from the N-terminus, the 274-residue chain is Large ribosomal subunit protein uL2 (274 aa).

A disordered region spans residues 224-256 (AMNPIDHPHGGGEGRTGEGRHAVDPWGNLTKGY). A compositionally biased stretch (basic and acidic residues) spans 229-246 (DHPHGGGEGRTGEGRHAV).

It belongs to the universal ribosomal protein uL2 family. Part of the 50S ribosomal subunit. Forms a bridge to the 30S subunit in the 70S ribosome.

One of the primary rRNA binding proteins. Required for association of the 30S and 50S subunits to form the 70S ribosome, for tRNA binding and peptide bond formation. It has been suggested to have peptidyltransferase activity; this is somewhat controversial. Makes several contacts with the 16S rRNA in the 70S ribosome. In Acidovorax ebreus (strain TPSY) (Diaphorobacter sp. (strain TPSY)), this protein is Large ribosomal subunit protein uL2.